Here is a 164-residue protein sequence, read N- to C-terminus: NADPH-dependent 7-cyano-7-deazaguanine reductase (164 aa).

The active-site Thioimide intermediate is the Cys55. Residue Asp62 is the Proton donor of the active site. Substrate-binding positions include 77–79 (VES) and 96–97 (HE).

The protein belongs to the GTP cyclohydrolase I family. QueF type 1 subfamily.

Its subcellular location is the cytoplasm. It carries out the reaction 7-aminomethyl-7-carbaguanine + 2 NADP(+) = 7-cyano-7-deazaguanine + 2 NADPH + 3 H(+). It participates in tRNA modification; tRNA-queuosine biosynthesis. Its function is as follows. Catalyzes the NADPH-dependent reduction of 7-cyano-7-deazaguanine (preQ0) to 7-aminomethyl-7-deazaguanine (preQ1). This chain is NADPH-dependent 7-cyano-7-deazaguanine reductase, found in Bacillus velezensis (strain DSM 23117 / BGSC 10A6 / LMG 26770 / FZB42) (Bacillus amyloliquefaciens subsp. plantarum).